The following is a 369-amino-acid chain: Beta-1,4-galactosyltransferase 2 (369 aa).

At Met-1–Ala-15 the chain is on the cytoplasmic side. Residues Val-16–Ala-36 traverse the membrane as a helical; Signal-anchor for type II membrane protein segment. Topologically, residues Gln-37–Gly-369 are lumenal. A compositionally biased stretch (polar residues) spans Ala-58–Ser-73. The segment at Ala-58–Val-90 is disordered. Asn-63 and Asn-68 each carry an N-linked (GlcNAc...) asparagine glycan. An intrachain disulfide couples Cys-94 to Cys-136. UDP-alpha-D-galactose contacts are provided by residues Pro-147–Arg-151, Phe-186–Arg-188, Val-214–Asp-215, and Trp-275. A disulfide bridge connects residues Cys-208 and Cys-227. Residue Asp-215 participates in Mn(2+) binding. Position 277-280 (Gly-277–Asp-280) interacts with N-acetyl-D-glucosamine. His-308 contacts Mn(2+). His-308–Arg-310 contacts UDP-alpha-D-galactose. Arg-320 is an N-acetyl-D-glucosamine binding site. Asn-354 carries N-linked (GlcNAc...) asparagine glycosylation.

It belongs to the glycosyltransferase 7 family. Requires Mn(2+) as cofactor.

Its subcellular location is the golgi apparatus. It is found in the golgi stack membrane. The catalysed reaction is D-glucose + UDP-alpha-D-galactose = lactose + UDP + H(+). It carries out the reaction an N-acetyl-beta-D-glucosaminyl derivative + UDP-alpha-D-galactose = a beta-D-galactosyl-(1-&gt;4)-N-acetyl-beta-D-glucosaminyl derivative + UDP + H(+). It catalyses the reaction N-acetyl-D-glucosamine + UDP-alpha-D-galactose = beta-D-galactosyl-(1-&gt;4)-N-acetyl-D-glucosamine + UDP + H(+). It functions in the pathway protein modification; protein glycosylation. In terms of biological role, responsible for the synthesis of complex-type N-linked oligosaccharides in many glycoproteins as well as the carbohydrate moieties of glycolipids. Can produce lactose. The chain is Beta-1,4-galactosyltransferase 2 from Mus musculus (Mouse).